The chain runs to 145 residues: SsrA-binding protein (145 aa).

Belongs to the SmpB family.

It localises to the cytoplasm. Required for rescue of stalled ribosomes mediated by trans-translation. Binds to transfer-messenger RNA (tmRNA), required for stable association of tmRNA with ribosomes. tmRNA and SmpB together mimic tRNA shape, replacing the anticodon stem-loop with SmpB. tmRNA is encoded by the ssrA gene; the 2 termini fold to resemble tRNA(Ala) and it encodes a 'tag peptide', a short internal open reading frame. During trans-translation Ala-aminoacylated tmRNA acts like a tRNA, entering the A-site of stalled ribosomes, displacing the stalled mRNA. The ribosome then switches to translate the ORF on the tmRNA; the nascent peptide is terminated with the 'tag peptide' encoded by the tmRNA and targeted for degradation. The ribosome is freed to recommence translation, which seems to be the essential function of trans-translation. This Mycoplasmopsis pulmonis (strain UAB CTIP) (Mycoplasma pulmonis) protein is SsrA-binding protein.